We begin with the raw amino-acid sequence, 503 residues long: Maturase K (503 aa).

The protein belongs to the intron maturase 2 family. MatK subfamily.

It is found in the plastid. The protein localises to the chloroplast. In terms of biological role, usually encoded in the trnK tRNA gene intron. Probably assists in splicing its own and other chloroplast group II introns. This Kunzea baxteri (Scarlet kunzea) protein is Maturase K.